The following is a 313-amino-acid chain: UDP-N-acetylglucosamine 3-dehydrogenase (313 aa).

Positions 13, 14, and 38 each coordinate NAD(+).

The protein belongs to the Gfo/Idh/MocA family. Exists in multiple oligomeric states.

It catalyses the reaction UDP-N-acetyl-alpha-D-glucosamine + NAD(+) = UDP-2-acetamido-3-dehydro-2-deoxy-alpha-D-glucopyranose + NADH + H(+). It functions in the pathway bacterial outer membrane biogenesis; LPS lipid A biosynthesis. Its function is as follows. Oxidoreductase involved in the synthesis of 2,3-diamino-2,3-dideoxy-D-glucopyranose (GlcN3N), which is a component of lipid A in some species. Catalyzes the NAD(+)-dependent oxidation of the glucosamine 3-position of UDP-N-acetyl-glucosamine (UDP-GlcNAc) to a ketone moiety, forming UDP-2-acetamido-3-dehydro-2-deoxy-alpha-D-glucopyranose (UDP-3-oxo-GlcNAc). Is specific for UDP-GlcNAc, no activity is observed with UDP-glucose (UDP-Glc), UDP-glucoronic acid (UDP-GlcA), UDP-galactose (UDP-Gal) and UDP-N-acetylgalactosamine (UDP-GalNAc). Cannot use FAD(+) and NADP(+). This chain is UDP-N-acetylglucosamine 3-dehydrogenase, found in Acidithiobacillus ferrooxidans (strain ATCC 23270 / DSM 14882 / CIP 104768 / NCIMB 8455) (Ferrobacillus ferrooxidans (strain ATCC 23270)).